We begin with the raw amino-acid sequence, 1245 residues long: ABC transporter B family member 13 (1245 aa).

A compositionally biased stretch (polar residues) spans 1–14 (MDNTERSSNGNIQA). The disordered stretch occupies residues 1 to 20 (MDNTERSSNGNIQAETEAKE). The region spanning 47 to 336 (MLLGGLGACI…AAPSLSAIAK (290 aa)) is the ABC transmembrane type-1 1 domain. A helical transmembrane segment spans residues 48 to 68 (LLGGLGACIHGATLPLFFVFF). The N-linked (GlcNAc...) asparagine glycan is linked to Asn-77. The next 5 membrane-spanning stretches (helical) occupy residues 94–114 (LYLVYLGLVNFVSAWIGVSCW), 171–191 (HVLRYLSQFIAGFVIGFLSVW), 195–215 (LLTLGVVPLIAIAGGGYAIVM), 276–296 (LGVGLTYSLLFCAWALLLWYA), and 314–334 (ILNVIFSGFALGQAAPSLSAI). 2 N-linked (GlcNAc...) asparagine glycosylation sites follow: Asn-351 and Asn-391. The 236-residue stretch at 372–607 (IEFQKVSFAY…GGDYATLVNC (236 aa)) folds into the ABC transporter 1 domain. 406 to 413 (GPSGSGKS) contributes to the ATP binding site. Residues 610–629 (TEPQENSRSIMSETCKSQAG) are compositionally biased toward polar residues. Residues 610–660 (TEPQENSRSIMSETCKSQAGSSSSRRVSSSRRTSSFRVDQEKTKNDDSKKD) form a disordered region. Positions 630-646 (SSSSRRVSSSRRTSSFR) are enriched in low complexity. Residues 647–660 (VDQEKTKNDDSKKD) show a composition bias toward basic and acidic residues. Residues 681–969 (ALLGSIGAVL…TLALTPDIVK (289 aa)) enclose the ABC transmembrane type-1 2 domain. The next 2 membrane-spanning stretches (helical) occupy residues 686–706 (IGAVLAGAQTPLFSMGIAYVL) and 725–745 (AIIFAGAGIVTAPIYLLQHYF). Residue Asn-778 is glycosylated (N-linked (GlcNAc...) asparagine). 4 helical membrane passes run 805–822 (IVQNLSLTVTALALAFFY), 828–848 (AVVTACFPLLIAASLTEQLFL), 913–933 (LSQFLAFCSYALGLWYVSVLI), and 947–967 (FMVLIVTAFSVSETLALTPDI). In terms of domain architecture, ABC transporter 2 spans 1004 to 1240 (IEFRNVSFVY…PNGFYKQLTS (237 aa)). Asn-1008 carries N-linked (GlcNAc...) asparagine glycosylation. 1039-1046 (GPSGSGKS) serves as a coordination point for ATP. A glycan (N-linked (GlcNAc...) asparagine) is linked at Asn-1106.

Belongs to the ABC transporter superfamily. ABCB family. Multidrug resistance exporter (TC 3.A.1.201) subfamily.

The protein resides in the membrane. The protein is ABC transporter B family member 13 (ABCB13) of Arabidopsis thaliana (Mouse-ear cress).